We begin with the raw amino-acid sequence, 227 residues long: Nodulation protein W (227 aa).

One can recognise a Response regulatory domain in the interval 21-135 (IVFVVEDDIS…ELLDAVVAAT (115 aa)). Aspartate 70 carries the 4-aspartylphosphate modification. Positions 151–216 (LKSLFETLSP…DLIRMSETLG (66 aa)) constitute an HTH luxR-type domain. A DNA-binding region (H-T-H motif) is located at residues 175 to 194 (NKQVAAELGLAEITVKIYRG).

Post-translationally, phosphorylated by NodV.

It is found in the cytoplasm. Its function is as follows. Member of the two-component regulatory system NodV/NodW probably involved in the regulation of the transcription of genes involved in the nodulation process. The sequence is that of Nodulation protein W (nodW) from Bradyrhizobium diazoefficiens (strain JCM 10833 / BCRC 13528 / IAM 13628 / NBRC 14792 / USDA 110).